Consider the following 356-residue polypeptide: Phosphoserine aminotransferase (356 aa).

Residue arginine 41 participates in L-glutamate binding. Residues 76–77 (AS), tryptophan 102, threonine 150, aspartate 169, and glutamine 192 each bind pyridoxal 5'-phosphate. Lysine 193 bears the N6-(pyridoxal phosphate)lysine mark. 234-235 (NT) lines the pyridoxal 5'-phosphate pocket.

The protein belongs to the class-V pyridoxal-phosphate-dependent aminotransferase family. SerC subfamily. Homodimer. Requires pyridoxal 5'-phosphate as cofactor.

Its subcellular location is the cytoplasm. It catalyses the reaction O-phospho-L-serine + 2-oxoglutarate = 3-phosphooxypyruvate + L-glutamate. The catalysed reaction is 4-(phosphooxy)-L-threonine + 2-oxoglutarate = (R)-3-hydroxy-2-oxo-4-phosphooxybutanoate + L-glutamate. It participates in amino-acid biosynthesis; L-serine biosynthesis; L-serine from 3-phospho-D-glycerate: step 2/3. The protein operates within cofactor biosynthesis; pyridoxine 5'-phosphate biosynthesis; pyridoxine 5'-phosphate from D-erythrose 4-phosphate: step 3/5. Catalyzes the reversible conversion of 3-phosphohydroxypyruvate to phosphoserine and of 3-hydroxy-2-oxo-4-phosphonooxybutanoate to phosphohydroxythreonine. The chain is Phosphoserine aminotransferase from Flavobacterium psychrophilum (strain ATCC 49511 / DSM 21280 / CIP 103535 / JIP02/86).